Here is a 551-residue protein sequence, read N- to C-terminus: Synapse-associated protein of 47 kDa (551 aa).

Disordered regions lie at residues 20–72 and 117–198; these read AGDE…AGKR and AMPA…GQGK. 3 stretches are compositionally biased toward low complexity: residues 26-59, 117-128, and 137-146; these read PAPT…AAAA, AMPAMPSIPSIP, and DGAEGAEGAV. 2 positions are modified to phosphoserine: Ser178 and Ser182. The segment covering 182-197 has biased composition (gly residues); sequence SGGGTPTGDEGQIGQG. Residue Thr186 is modified to Phosphothreonine. One can recognise a BSD domain in the interval 295-347; that stretch reads VDFEFSYDTAYPTAIAIMAEDKALETMRFELVPKIITEENFWRNYFYRVSLII. Residues 360-391 form a disordered region; that stretch reads VGQASSGEDANEVATKEKKSKTAEPAKGDSSV. Residues 373–386 are compositionally biased toward basic and acidic residues; the sequence is ATKEKKSKTAEPAK. A Phosphoserine modification is found at Ser433. The tract at residues 487–551 is disordered; the sequence is KDYEVVDEGG…DLIEDTDDLK (65 aa). Residues 514-523 show a composition bias toward acidic residues; it reads DDTEADEDEP. The segment covering 524–535 has biased composition (polar residues); it reads TISNLRTRSTNN. Thr530 bears the Phosphothreonine mark. Over residues 536-551 the composition is skewed to acidic residues; that stretch reads DWEEYADLIEDTDDLK.

In terms of tissue distribution, expressed specifically in neurons and transported to synaptic terminals.

The polypeptide is Synapse-associated protein of 47 kDa (Sap47) (Drosophila melanogaster (Fruit fly)).